We begin with the raw amino-acid sequence, 598 residues long: UvrABC system protein C (598 aa).

In terms of domain architecture, GIY-YIG spans 14 to 91; the sequence is DSPGCYLHKD…IQKNMPKYNI (78 aa). A UVR domain is found at 196–231; that stretch reads DKIIEDLRSKMLAASEEMAFERAAEYRDLISGIATM.

The protein belongs to the UvrC family. In terms of assembly, interacts with UvrB in an incision complex.

It is found in the cytoplasm. Functionally, the UvrABC repair system catalyzes the recognition and processing of DNA lesions. UvrC both incises the 5' and 3' sides of the lesion. The N-terminal half is responsible for the 3' incision and the C-terminal half is responsible for the 5' incision. The protein is UvrABC system protein C of Streptococcus pyogenes serotype M18 (strain MGAS8232).